The primary structure comprises 422 residues: Keratin, type I cytoskeletal 23 (422 aa).

Residues 1-13 (MNSGHSFSQTPSA) show a composition bias toward polar residues. The interval 1 to 71 (MNSGHSFSQT…GRSSPLLGGN (71 aa)) is head. Residues 1-73 (MNSGHSFSQT…SSPLLGGNGK (73 aa)) form a disordered region. Positions 72–107 (GKATMQNLNDRLASYLEKVRALEEANMKLESRILKW) are coil 1A. In terms of domain architecture, IF rod spans 72–382 (GKATMQNLND…RLLEGESEGT (311 aa)). Positions 108–125 (HQQRDPGSKKDYSQYEEN) are linker 1. Positions 126–217 (ITHLQEQIVD…KHHEQEMEKH (92 aa)) are coil 1B. The tract at residues 218–240 (HVPSDFNVNVKVDTGPREDLIKV) is linker 12. Residues 241 to 378 (LEDMRQEYEL…TTYRRLLEGE (138 aa)) form a coil 2 region. Positions 379 to 422 (SEGTREESKSSMKVSATPKIKAITQETINGRLVLCQVNEIQKHA) are rod-like helical tail.

This sequence belongs to the intermediate filament family. As to quaternary structure, heterotetramer of two type I and two type II keratins.

The sequence is that of Keratin, type I cytoskeletal 23 (KRT23) from Homo sapiens (Human).